Reading from the N-terminus, the 349-residue chain is Micronemal protein 6 (349 aa).

The first 23 residues, methionine 1 to glycine 23, serve as a signal peptide directing secretion. 3 EGF-like domains span residues isoleucine 36–methionine 80, threonine 96–glycine 134, and glycine 147–lysine 192. 9 disulfides stabilise this stretch: cysteine 40-cysteine 53, cysteine 45-cysteine 62, cysteine 64-cysteine 79, cysteine 100-cysteine 113, cysteine 105-cysteine 122, cysteine 124-cysteine 140, cysteine 148-cysteine 162, cysteine 153-cysteine 173, and cysteine 175-cysteine 191. The tract at residues valine 194–isoleucine 291 is disordered. The tract at residues glutamate 204–glutamate 283 is acidic domain. Basic and acidic residues-rich tracts occupy residues histidine 210–leucine 247 and glutamate 276–serine 285. The helical transmembrane segment at alanine 290–alanine 310 threads the bilayer.

Interacts directly with MIC1. Part of the MIC6-MIC1-MIC4 complex. In terms of processing, subject to proteolytic processing involving both the N-terminus and the C-terminus. The first EGF-like domain (EGF-like domain 1) is removed by proteolytic cleavage by ASP3 and is not present in the mature protein. Released as soluble 35 kDa protein after proteolytic processing at the C-terminus.

It localises to the cytoplasmic vesicle. It is found in the secretory vesicle. The protein localises to the microneme membrane. The protein resides in the secreted. Functionally, escorter protein required for import of MIC1 and MIC4 adhesins into the microneme. The sequence is that of Micronemal protein 6 from Toxoplasma gondii.